A 242-amino-acid polypeptide reads, in one-letter code: N-acetylmuramate alpha-1-phosphate uridylyltransferase (242 aa).

Residues 16–18 (GTR) and K28 contribute to the UTP site. A substrate-binding site is contributed by N113. D115 provides a ligand contact to Mg(2+). D158 serves as a coordination point for substrate.

The protein belongs to the nucleotidyltransferase MurU family. Monomer. The cofactor is Mg(2+).

It catalyses the reaction N-acetyl-alpha-D-muramate 1-phosphate + UDP + H(+) = UDP-N-acetyl-alpha-D-muramate + phosphate. Its pathway is cell wall biogenesis; peptidoglycan recycling. Its function is as follows. Catalyzes the formation of UDP-N-acetylmuramate (UDP-MurNAc), a crucial precursor of the bacterial peptidoglycan cell wall, from UTP and MurNAc-alpha-1P. Is likely involved in peptidoglycan recycling as part of a cell wall recycling pathway that bypasses de novo biosynthesis of the peptidoglycan precursor UDP-MurNAc. Is able to complement the fosfomycin sensitivity phenotype of a P.putida mutant lacking murU. This chain is N-acetylmuramate alpha-1-phosphate uridylyltransferase, found in Caulobacter vibrioides (strain ATCC 19089 / CIP 103742 / CB 15) (Caulobacter crescentus).